A 132-amino-acid chain; its full sequence is Agouti-signaling protein (132 aa).

A signal peptide spans 1–22; that stretch reads MDVTRLVLATLLVFLCFFAAYS. N-linked (GlcNAc...) asparagine glycosylation is present at N39. Residues 60–93 are disordered; it reads KKISRKEAEKRRSSKKEASKQKVARPRTPLSVPC. Basic and acidic residues predominate over residues 64–79; sequence RKEAEKRRSSKKEASK. Cystine bridges form between C93–C108, C100–C114, C107–C125, C111–C132, and C116–C123. The Agouti domain occupies 93–132; it reads CVSTRGSCKPPAPACCHPCASCQCRFFRSACSCRVLNVNC.

The protein localises to the secreted. Involved in the regulation of melanogenesis. The binding of ASP to MC1R precludes alpha-MSH initiated signaling and thus blocks production of cAMP, leading to a down-regulation of eumelanogenesis (brown/black pigment) and thus increasing synthesis of pheomelanin (yellow/red pigment). This chain is Agouti-signaling protein (ASIP), found in Cebuella pygmaea (Pygmy marmoset).